The chain runs to 449 residues: Putative cytochrome P450 135A1 (449 aa).

Cys-383 provides a ligand contact to heme.

It belongs to the cytochrome P450 family. The cofactor is heme.

The polypeptide is Putative cytochrome P450 135A1 (cyp135A1) (Mycobacterium tuberculosis (strain CDC 1551 / Oshkosh)).